The following is a 294-amino-acid chain: HTH-type transcriptional regulator XapR (294 aa).

Positions 7–64 constitute an HTH lysR-type domain; the sequence is TDLKLLRYFLAVAEELHFGRAAARLNMSQPPLSIHIKELENQLGTQLFIRHSRSVVLT. The segment at residues 24–43 is a DNA-binding region (H-T-H motif); the sequence is FGRAAARLNMSQPPLSIHIK.

Belongs to the LysR transcriptional regulatory family.

Positive regulator required for the expression of xapA and xapB. Binds to the inducer xanthosine. The polypeptide is HTH-type transcriptional regulator XapR (xapR) (Escherichia coli (strain K12)).